We begin with the raw amino-acid sequence, 707 residues long: MAP kinase-interacting serine/threonine-protein kinase mnk-1 (707 aa).

The segment covering 1-24 (MFFLDNTDSMTSSSRGITMPNTIS) has biased composition (polar residues). 2 disordered regions span residues 1-29 (MFFL…HEDV) and 101-131 (RQRE…YVGR). Residues 203–493 (KLTDEHLGSG…ADQILSHRWL (291 aa)) form the Protein kinase domain. Residues 209-217 (LGSGAYGSV) and lysine 232 contribute to the ATP site. Aspartate 325 (proton acceptor) is an active-site residue. Disordered regions lie at residues 589-628 (RSGE…SADD) and 688-707 (FEDE…QVNV).

Belongs to the protein kinase superfamily. CAMK Ser/Thr protein kinase family. The cofactor is Mg(2+). In terms of tissue distribution, expressed in pharynx, intestine, vulva and body wall muscles.

The protein resides in the nucleus. It is found in the cytoplasm. It carries out the reaction L-seryl-[protein] + ATP = O-phospho-L-seryl-[protein] + ADP + H(+). It catalyses the reaction L-threonyl-[protein] + ATP = O-phospho-L-threonyl-[protein] + ADP + H(+). In terms of biological role, serine/threonine-protein kinase which is required in the germline to positively regulate lifespan. May play a role in body wall muscle contraction. May be involved in embryonic cytokinesis. The protein is MAP kinase-interacting serine/threonine-protein kinase mnk-1 of Caenorhabditis elegans.